A 752-amino-acid polypeptide reads, in one-letter code: Polyribonucleotide nucleotidyltransferase (752 aa).

Mg(2+) contacts are provided by Asp529 and Asp535. In terms of domain architecture, KH spans 595-654 (PRVTTIKVPVDKIGEVIGPKGKVINAITEETGAQISIEDDGTVFVGATDGPSAQAAIDKI). An S1 motif domain is found at 666 to 735 (GERFLGTVVK…KRGKISLILV (70 aa)).

It belongs to the polyribonucleotide nucleotidyltransferase family. Mg(2+) is required as a cofactor.

It localises to the cytoplasm. It catalyses the reaction RNA(n+1) + phosphate = RNA(n) + a ribonucleoside 5'-diphosphate. Involved in mRNA degradation. Catalyzes the phosphorolysis of single-stranded polyribonucleotides processively in the 3'- to 5'-direction. This is Polyribonucleotide nucleotidyltransferase from Mycobacterium tuberculosis (strain ATCC 25177 / H37Ra).